The primary structure comprises 129 residues: Phosphoribosyl-AMP cyclohydrolase (129 aa).

Residue D78 participates in Mg(2+) binding. Residue C79 participates in Zn(2+) binding. Residues D80 and D82 each contribute to the Mg(2+) site. Residues C96 and C103 each contribute to the Zn(2+) site.

It belongs to the PRA-CH family. In terms of assembly, homodimer. The cofactor is Mg(2+). Zn(2+) is required as a cofactor.

The protein resides in the cytoplasm. The catalysed reaction is 1-(5-phospho-beta-D-ribosyl)-5'-AMP + H2O = 1-(5-phospho-beta-D-ribosyl)-5-[(5-phospho-beta-D-ribosylamino)methylideneamino]imidazole-4-carboxamide. It participates in amino-acid biosynthesis; L-histidine biosynthesis; L-histidine from 5-phospho-alpha-D-ribose 1-diphosphate: step 3/9. Catalyzes the hydrolysis of the adenine ring of phosphoribosyl-AMP. The sequence is that of Phosphoribosyl-AMP cyclohydrolase from Nitrosomonas eutropha (strain DSM 101675 / C91 / Nm57).